The sequence spans 88 residues: MKVKPLGDRVLVKPDAVETKTAGGIIIPDTAQEKTQRGVVVAVGDDKEKIKVSVGQKVIHDKYAGTQIQIDGVDHLILKSNDLVAVVE.

It belongs to the GroES chaperonin family. As to quaternary structure, heptamer of 7 subunits arranged in a ring. Interacts with the chaperonin GroEL.

The protein resides in the cytoplasm. Its function is as follows. Together with the chaperonin GroEL, plays an essential role in assisting protein folding. The GroEL-GroES system forms a nano-cage that allows encapsulation of the non-native substrate proteins and provides a physical environment optimized to promote and accelerate protein folding. GroES binds to the apical surface of the GroEL ring, thereby capping the opening of the GroEL channel. The chain is Co-chaperonin GroES from Treponema denticola (strain ATCC 35405 / DSM 14222 / CIP 103919 / JCM 8153 / KCTC 15104).